The sequence spans 325 residues: MSETASWQPSASIPNLLKRAAIMAEIRRFFADRGVLEVETPCMSQATVTDIHLVPFETRFVGPGHSQGMNLWLMTSPEYHMKRLLVAGCGPVFQLCRSFRNEEMGRYHNPEFTMLEWYRPHYDMYRLMNEVDDLLQQVLDCPAAESLSYQQAFLRYLEIDPLSADKTQLREVAAKLDLSNVADTEEDRDTLLQLLFTFGVEPNIGKEKPTFVYHFPASQASLAQISTEDHRVAERFEVYYKGIELANGFHELTDAREQQQRFEQDNRKRAARGLPQHPIDQNLIEALKVGMPDCSGVALGVDRLVMLALGAETLAEVIAFSVDRA.

76–78 (SPE) contacts substrate. ATP is bound by residues 100 to 102 (RNE) and asparagine 109. Tyrosine 118 provides a ligand contact to substrate. 244–245 (EL) contributes to the ATP binding site. Glutamate 251 serves as a coordination point for substrate. Glycine 300 contributes to the ATP binding site.

The protein belongs to the class-II aminoacyl-tRNA synthetase family. EpmA subfamily. As to quaternary structure, homodimer.

The enzyme catalyses D-beta-lysine + L-lysyl-[protein] + ATP = N(6)-((3R)-3,6-diaminohexanoyl)-L-lysyl-[protein] + AMP + diphosphate + H(+). Functionally, with EpmB is involved in the beta-lysylation step of the post-translational modification of translation elongation factor P (EF-P) on 'Lys-34'. Catalyzes the ATP-dependent activation of (R)-beta-lysine produced by EpmB, forming a lysyl-adenylate, from which the beta-lysyl moiety is then transferred to the epsilon-amino group of EF-P 'Lys-34'. This Escherichia coli O139:H28 (strain E24377A / ETEC) protein is Elongation factor P--(R)-beta-lysine ligase.